Consider the following 200-residue polypeptide: Type 1 fimbriae regulatory protein FimB (200 aa).

In terms of domain architecture, Tyr recombinase spans 8 to 189 (KKRNFLTHSE…NAGRFYGIWD (182 aa)). Active-site residues include arginine 47, lysine 72, histidine 141, arginine 144, and histidine 167. Residue tyrosine 176 is the O-(3'-phospho-DNA)-tyrosine intermediate of the active site.

This sequence belongs to the 'phage' integrase family.

Functionally, fimB is one of the 2 regulatory proteins which control the phase variation of type 1 fimbriae in E.coli. These proteins mediate the periodic inversion of a 300bp DNA segment that harbors the promoter for the fimbrial structural gene, fimA. FimB switches fimA on. This is Type 1 fimbriae regulatory protein FimB (fimB) from Escherichia coli O157:H7.